Reading from the N-terminus, the 76-residue chain is MDGDIENQVELEEKTRLINQVLELQNTLEDLSARVDAVKEENLKLKSENQVLGQYIENLMSASSVFQTTDSKSKRK.

Residues 6 to 52 (ENQVELEEKTRLINQVLELQNTLEDLSARVDAVKEENLKLKSENQVL) adopt a coiled-coil conformation.

The protein belongs to the SCOC family.

The protein localises to the golgi apparatus membrane. The protein resides in the golgi apparatus. It is found in the trans-Golgi network. It localises to the cytoplasm. Its subcellular location is the cytosol. Functionally, positive regulator of amino acid starvation-induced autophagy. The polypeptide is Short coiled-coil protein B (scocb) (Danio rerio (Zebrafish)).